Here is a 125-residue protein sequence, read N- to C-terminus: MVELDFNKTGGLIPAIAQDHETGEVLMLAYMNEAAWNKTLESGMATYFSRSRQSLWKKGETSGHVQVVKEIRIDCDNDTVLLKVEQKGGAACHLGYKSCFFRRVVKGDDPVIMEQQIFDPKKVYK.

Position 74 (D74) interacts with Mg(2+). A Zn(2+)-binding site is contributed by C75. The Mg(2+) site is built by D76 and D78. Residues C92 and C99 each contribute to the Zn(2+) site.

Belongs to the PRA-CH family. As to quaternary structure, homodimer. It depends on Mg(2+) as a cofactor. Zn(2+) serves as cofactor.

It localises to the cytoplasm. It carries out the reaction 1-(5-phospho-beta-D-ribosyl)-5'-AMP + H2O = 1-(5-phospho-beta-D-ribosyl)-5-[(5-phospho-beta-D-ribosylamino)methylideneamino]imidazole-4-carboxamide. The protein operates within amino-acid biosynthesis; L-histidine biosynthesis; L-histidine from 5-phospho-alpha-D-ribose 1-diphosphate: step 3/9. Catalyzes the hydrolysis of the adenine ring of phosphoribosyl-AMP. This Desulforapulum autotrophicum (strain ATCC 43914 / DSM 3382 / VKM B-1955 / HRM2) (Desulfobacterium autotrophicum) protein is Phosphoribosyl-AMP cyclohydrolase.